A 382-amino-acid polypeptide reads, in one-letter code: MSVSNRNGNGSEVIYVGDRSTNRPPRNAPSPDEDRKEVKILFFDLTYYNTTTKFLLCCAGVFVLYLLYGYMQELIFTLDGFKPYGWFLTLVQFAYYTVFGYVERSLESKRVPRCIPMKTYVLLAFLTLGTMGLSNSSLGYLNYPTQVIFKCCKLVPVLIGSILIQGKKHGPLDFLAAIAMCLGLTLFTLADSQVSPNFNPFGVLLISLALLCDAAIGNVQEKAMREHKAPNNEVVIYSYGIGFVYLSVIMLLTGNLFSGITFCMKYPVETFGYAFLFSLSGYLGIQIVLTLVRTCGAPLAATVTTARKAVTIALSFVFFSKPFTINYLWSGLIVVLGIYLNVYSKRSKLTFADLNRTAERIYRKLVPQRGGSSSTKKLLLEV.

Residues 1–10 show a composition bias toward polar residues; it reads MSVSNRNGNG. The tract at residues 1-33 is disordered; it reads MSVSNRNGNGSEVIYVGDRSTNRPPRNAPSPDE. The next 10 helical transmembrane spans lie at 56–76, 83–103, 121–141, 144–164, 170–190, 197–217, 234–254, 271–291, 299–319, and 323–343; these read LCCA…ELIF, PYGW…GYVE, VLLA…LGYL, PTQV…SILI, GPLD…FTLA, NFNP…AAIG, VVIY…LLTG, FGYA…VLTL, LAAT…FVFF, and FTIN…LNVY.

This sequence belongs to the nucleotide-sugar transporter family. SLC35B subfamily.

Its subcellular location is the golgi apparatus membrane. Functionally, mediates the transport of adenosine 3'-phospho 5'-phosphosulfate (PAPS), from cytosol into Golgi. PAPS is a universal sulfuryl donor for sulfation events that take place in the Golgi. Essential for viability. Involved in glycosaminoglycan synthesis and the subsequent signaling. May be involved in hh and dpp signaling by controlling the sulfation of heparan sulfate (HS). The chain is Adenosine 3'-phospho 5'-phosphosulfate transporter 2 from Aedes aegypti (Yellowfever mosquito).